We begin with the raw amino-acid sequence, 213 residues long: TVP38/TMEM64 family membrane protein YtxB (213 aa).

Helical transmembrane passes span 9–29 (WLAV…YLNV), 34–54 (IRVW…GISI), 58–78 (LVLF…GPLL), 81–101 (LYTL…AGLF), 159–179 (AVGI…FLAG), and 181–201 (LPAF…PFIF).

The protein belongs to the TVP38/TMEM64 family.

It is found in the cell membrane. The protein is TVP38/TMEM64 family membrane protein YtxB (ytxB) of Bacillus subtilis (strain 168).